A 1041-amino-acid polypeptide reads, in one-letter code: Histone deacetylase complex subunit SAP130-B (1041 aa).

Disordered stretches follow at residues 1-62 (MSSQ…QEPV), 111-131 (KSTM…SAVP), 572-592 (TNQG…EPKS), 614-769 (TPAG…PSGA), and 806-852 (VLAN…DEER). Polar residues predominate over residues 18 to 30 (VSNSGASVGQNVQ). The segment covering 33–42 (EVAREIDVQS) has biased composition (basic and acidic residues). Low complexity predominate over residues 576 to 592 (VQTSSVSSQQASSEPKS). A compositionally biased stretch (polar residues) spans 614-641 (TPAGTTVMQSHSQSPGIGSSPAQGSSPR). Residues 707-728 (PGAADQPSAAASLPSSHHPTAA) are compositionally biased toward low complexity.

The protein belongs to the SAP130 family.

The protein localises to the nucleus. In terms of biological role, acts as a transcriptional repressor. In Xenopus laevis (African clawed frog), this protein is Histone deacetylase complex subunit SAP130-B (sap130-b).